Here is a 477-residue protein sequence, read N- to C-terminus: GH30 family xylanase (477 aa).

An N-terminal signal peptide occupies residues 1 to 19 (MYSLLIALLCAGTAVDAQA). N194, N237, and N331 each carry an N-linked (GlcNAc...) asparagine glycan.

The protein belongs to the glycosyl hydrolase 30 family.

The protein resides in the secreted. Activity is enhanced by 10 mM Co(2+), Cu 2(2+) and Mn(2+) to levels as high as 44%. Partial inhibition of activity from 5 to 15% is observed in the presence of the following compouinds at a centration of 10 mM (from higher inhibition to lower): EDTA &gt; Mg(2+) &gt; urea, Zn(2+) &gt; Fe(3+). Functionally, xylanase exhibiting endo- and exo-xylanase activity. Shows the highest activity toward beechwood glucuronoxylan, which consists of a beta-1,4-linked xylose backbone decorated with the methylated form of D-glucuronic acid (MeGlcA) attached directly to the main chain at xylose C2. Also acts against wheat arabinoxylan, a xylan without MeGlcA substituents along the main chain, but the xylanase activity is about two orders of magnitude lower than that achieved in the case of beechwood xylan. Shows no activity against carob galactomannan, konjac glucomannan, or barley beta-glucan. The recombinant xylanase also exhibits an exo-activity by releasing processively disaccharide units from the non-reducing end of linear and decorated xylooligosaccharides (XOS). This is GH30 family xylanase from Thermothelomyces thermophilus (strain ATCC 42464 / BCRC 31852 / DSM 1799) (Sporotrichum thermophile).